Here is a 178-residue protein sequence, read N- to C-terminus: Non-specific lipid transfer protein-like 1 (178 aa).

The N-terminal stretch at 1-26 is a signal peptide; it reads MAVAARAAAVACLLVVGLAAVAGVDG. Intrachain disulfides connect Cys-50/Cys-68 and Cys-69/Cys-110. Asn-99 carries an N-linked (GlcNAc...) asparagine glycan. Ala-149 is lipidated: GPI-anchor amidated alanine. Residues 150 to 178 constitute a propeptide, removed in mature form; it reads AARSPMASTTAVLVVAAAVAAPLLAFFHF.

This sequence belongs to the plant LTP family. In terms of processing, O-glycosylated on hydroxyprolines; noncontiguous hydroxylproline residues are glycosylated with arabinogalactan. As to expression, expressed in roots, stems, leaves, flowers and seeds.

The protein localises to the vacuole. It is found in the aleurone grain membrane. The polypeptide is Non-specific lipid transfer protein-like 1 (LTPL1) (Oryza sativa subsp. japonica (Rice)).